A 688-amino-acid polypeptide reads, in one-letter code: Glycine--tRNA ligase beta subunit (688 aa).

This sequence belongs to the class-II aminoacyl-tRNA synthetase family. In terms of assembly, tetramer of two alpha and two beta subunits.

Its subcellular location is the cytoplasm. It catalyses the reaction tRNA(Gly) + glycine + ATP = glycyl-tRNA(Gly) + AMP + diphosphate. The sequence is that of Glycine--tRNA ligase beta subunit from Psychromonas ingrahamii (strain DSM 17664 / CCUG 51855 / 37).